The following is a 37-amino-acid chain: Dolichyl-diphosphooligosaccharide--protein glycosyltransferase subunit 4B (37 aa).

Topologically, residues 1–8 (MFDDQDLG) are lumenal. A helical membrane pass occupies residues 9 to 29 (FFANFLGIFIFVLVMAYHFVM). Residues 30–37 (ADVKYEGN) lie on the Cytoplasmic side of the membrane.

This sequence belongs to the OST4 family. Component of the oligosaccharyltransferase (OST) complex.

The protein localises to the endoplasmic reticulum membrane. Its function is as follows. Subunit of the oligosaccharyl transferase (OST) complex that catalyzes the initial transfer of a defined glycan (Glc(3)Man(9)GlcNAc(2) in eukaryotes) from the lipid carrier dolichol-pyrophosphate to an asparagine residue within an Asn-X-Ser/Thr consensus motif in nascent polypeptide chains, the first step in protein N-glycosylation. N-glycosylation occurs cotranslationally and the complex associates with the Sec61 complex at the channel-forming translocon complex that mediates protein translocation across the endoplasmic reticulum (ER). All subunits are required for a maximal enzyme activity. The polypeptide is Dolichyl-diphosphooligosaccharide--protein glycosyltransferase subunit 4B (OST4B) (Oryza sativa subsp. japonica (Rice)).